Consider the following 330-residue polypeptide: Ketol-acid reductoisomerase (NADP(+)) (330 aa).

Positions Val-2–Thr-182 constitute a KARI N-terminal Rossmann domain. Residues Tyr-25 to Gln-28, Ser-51, and Ser-53 contribute to the NADP(+) site. His-108 is an active-site residue. Position 134 (Gly-134) interacts with NADP(+). The 146-residue stretch at Thr-183–Ile-328 folds into the KARI C-terminal knotted domain. Mg(2+)-binding residues include Asp-191, Glu-195, Glu-227, and Glu-231. Ser-252 is a substrate binding site.

Belongs to the ketol-acid reductoisomerase family. Mg(2+) serves as cofactor.

The catalysed reaction is (2R)-2,3-dihydroxy-3-methylbutanoate + NADP(+) = (2S)-2-acetolactate + NADPH + H(+). It carries out the reaction (2R,3R)-2,3-dihydroxy-3-methylpentanoate + NADP(+) = (S)-2-ethyl-2-hydroxy-3-oxobutanoate + NADPH + H(+). Its pathway is amino-acid biosynthesis; L-isoleucine biosynthesis; L-isoleucine from 2-oxobutanoate: step 2/4. The protein operates within amino-acid biosynthesis; L-valine biosynthesis; L-valine from pyruvate: step 2/4. In terms of biological role, involved in the biosynthesis of branched-chain amino acids (BCAA). Catalyzes an alkyl-migration followed by a ketol-acid reduction of (S)-2-acetolactate (S2AL) to yield (R)-2,3-dihydroxy-isovalerate. In the isomerase reaction, S2AL is rearranged via a Mg-dependent methyl migration to produce 3-hydroxy-3-methyl-2-ketobutyrate (HMKB). In the reductase reaction, this 2-ketoacid undergoes a metal-dependent reduction by NADPH to yield (R)-2,3-dihydroxy-isovalerate. The polypeptide is Ketol-acid reductoisomerase (NADP(+)) (Frankia alni (strain DSM 45986 / CECT 9034 / ACN14a)).